The chain runs to 198 residues: Eukaryotic translation initiation factor isoform 4E (198 aa).

The disordered stretch occupies residues 1–25 (MATDDVNEPLPAAAELPATEAEKQP). Ala2 carries the post-translational modification N-acetylalanine. Over residues 8–19 (EPLPAAAELPAT) the composition is skewed to low complexity. MRNA-binding positions include 46–47 (WG) and 92–93 (WE). Cysteines 97 and 138 form a disulfide. 145–152 (RPQSKQDK) contributes to the mRNA binding site.

The protein belongs to the eukaryotic initiation factor 4E family. In terms of assembly, EIF4F is a multi-subunit complex, the composition of which varies with external and internal environmental conditions. It is composed of at least EIF4A, EIF4E and EIF4G. EIF4E is also known to interact with other partners. In higher plants two isoforms of EIF4F have been identified, named isoform EIF4F and isoform EIF(iso)4F. Isoform EIF4F has subunits p220 and p26, whereas isoform EIF(iso)4F has subunits p82 and p28. This isoform interacts with the viral protein genome linked (VPg)-proteinase of turnip mosaic potyvirus. Interacts directly with LOX2. Interacts with BTF3. According to the redox status, the Cys-97-Cys-138 disulfide bridge may have a role in regulating protein function by affecting its ability to bind capped mRNA. As to expression, abundant in floral organs and in young developing tissues.

Its function is as follows. Recognizes and binds the 7-methylguanosine-containing mRNA cap during an early step in the initiation of protein synthesis and facilitates ribosome binding by inducing the unwinding of the mRNAs secondary structures. Mediates susceptibility to Turnipmosaic potyvirus (TuMV) and Tobacco etch potyvirus (TEV). The polypeptide is Eukaryotic translation initiation factor isoform 4E (EIF(ISO)4E) (Arabidopsis thaliana (Mouse-ear cress)).